The primary structure comprises 177 residues: 3-hydroxydecanoyl-[acyl-carrier-protein] dehydratase (177 aa).

Residue His76 is part of the active site.

The protein belongs to the thioester dehydratase family. FabA subfamily. In terms of assembly, homodimer.

The protein resides in the cytoplasm. The enzyme catalyses a (3R)-hydroxyacyl-[ACP] = a (2E)-enoyl-[ACP] + H2O. It carries out the reaction (3R)-hydroxydecanoyl-[ACP] = (2E)-decenoyl-[ACP] + H2O. The catalysed reaction is (2E)-decenoyl-[ACP] = (3Z)-decenoyl-[ACP]. The protein operates within lipid metabolism; fatty acid biosynthesis. Necessary for the introduction of cis unsaturation into fatty acids. Catalyzes the dehydration of (3R)-3-hydroxydecanoyl-ACP to E-(2)-decenoyl-ACP and then its isomerization to Z-(3)-decenoyl-ACP. Can catalyze the dehydratase reaction for beta-hydroxyacyl-ACPs with saturated chain lengths up to 16:0, being most active on intermediate chain length. In Haemophilus influenzae (strain PittGG), this protein is 3-hydroxydecanoyl-[acyl-carrier-protein] dehydratase.